Reading from the N-terminus, the 279-residue chain is MDNTLNAFLRGIIEAATEFLPVSSTGHLFLFSYFFPFQNLSVPHEAFEDLFDIFIQTGAILSVVVLYYKTLWSHLVEAVRFGLGKSTDRSGFQFYLNLIVGILPILILGFLLKSQLDQIKMRSDLLLILGMSWFVGGIIMVFVEKRHLDESSGKTIGFKESIIVGFLQCFALIPGVSRSAATIISARTMGVSKKDSAEFSFFLAIPVLTLAGIYKLYKHRQILNSETIGLLLFGSIISFIICYFIIRLFMAFIRRRSFISFGVYRILLGLLVILYFVRY.

Transmembrane regions (helical) follow at residues 17-37, 46-66, 92-112, 123-143, 156-176, 197-217, 226-246, and 257-277; these read TEFL…FFPF, AFED…VVVL, FQFY…GFLL, SDLL…MVFV, IGFK…IPGV, AEFS…YKLY, ETIG…YFII, and SFIS…LYFV.

This sequence belongs to the UppP family.

It is found in the cell inner membrane. It catalyses the reaction di-trans,octa-cis-undecaprenyl diphosphate + H2O = di-trans,octa-cis-undecaprenyl phosphate + phosphate + H(+). Catalyzes the dephosphorylation of undecaprenyl diphosphate (UPP). Confers resistance to bacitracin. The sequence is that of Undecaprenyl-diphosphatase from Leptospira biflexa serovar Patoc (strain Patoc 1 / ATCC 23582 / Paris).